Here is a 381-residue protein sequence, read N- to C-terminus: Sensor histidine kinase FlgS (381 aa).

The region spanning 177-381 (HLAHEIRNPV…TFEIKILNAS (205 aa)) is the Histidine kinase domain. A Phosphohistidine; by autocatalysis modification is found at His-180.

Interacts (via its C-terminal kinase domain) with FlhA (via N-terminus). In terms of processing, autophosphorylated.

The enzyme catalyses ATP + protein L-histidine = ADP + protein N-phospho-L-histidine.. Member of the two-component regulatory system FlgR/FlgS that induces the transcriptional induction of the genes needed in motility and flagellar biogenesis. Also plays an essential role in bacterial survival at pH 2.5 independently of FlgR. Functions as a sensor protein kinase which is autophosphorylated at a histidine residue and transfers its phosphate group to the conserved aspartic acid residue in the regulatory domain of FlgR. In turn, FlgR functions as a transcriptional regulator initiating transcription from RpoN-dependent promoters. This Helicobacter pylori (strain ATCC 700392 / 26695) (Campylobacter pylori) protein is Sensor histidine kinase FlgS (flgS).